The primary structure comprises 137 residues: Large-conductance mechanosensitive channel (137 aa).

Helical transmembrane passes span 10–30 (FAMRGNVVDLAVGVIIGAAFG) and 76–96 (GTFIQSIFDFVIVALAIFSAV).

Belongs to the MscL family. As to quaternary structure, homopentamer.

The protein localises to the cell inner membrane. Functionally, channel that opens in response to stretch forces in the membrane lipid bilayer. May participate in the regulation of osmotic pressure changes within the cell. This is Large-conductance mechanosensitive channel from Yersinia pseudotuberculosis serotype O:1b (strain IP 31758).